A 156-amino-acid polypeptide reads, in one-letter code: FAD synthase (156 aa).

ATP-binding positions include 9–10, 14–17, N92, and H119; these read TF and HPGH.

Belongs to the archaeal FAD synthase family. Homodimer. It depends on a divalent metal cation as a cofactor.

It carries out the reaction FMN + ATP + H(+) = FAD + diphosphate. The protein operates within cofactor biosynthesis; FAD biosynthesis; FAD from FMN: step 1/1. In terms of biological role, catalyzes the transfer of the AMP portion of ATP to flavin mononucleotide (FMN) to produce flavin adenine dinucleotide (FAD) coenzyme. The sequence is that of FAD synthase from Methanospirillum hungatei JF-1 (strain ATCC 27890 / DSM 864 / NBRC 100397 / JF-1).